The chain runs to 367 residues: Deoxyhypusine synthase-like protein (367 aa).

Positions 1–23 (MKSLFQRRASKVRETEAMNAPVP) are disordered.

Belongs to the deoxyhypusine synthase family.

The chain is Deoxyhypusine synthase-like protein from Caulobacter vibrioides (strain ATCC 19089 / CIP 103742 / CB 15) (Caulobacter crescentus).